Here is a 122-residue protein sequence, read N- to C-terminus: Ribosome-binding factor A (122 aa).

The protein belongs to the RbfA family. Monomer. Binds 30S ribosomal subunits, but not 50S ribosomal subunits or 70S ribosomes.

The protein resides in the cytoplasm. Its function is as follows. One of several proteins that assist in the late maturation steps of the functional core of the 30S ribosomal subunit. Associates with free 30S ribosomal subunits (but not with 30S subunits that are part of 70S ribosomes or polysomes). Required for efficient processing of 16S rRNA. May interact with the 5'-terminal helix region of 16S rRNA. This is Ribosome-binding factor A from Dichelobacter nodosus (strain VCS1703A).